Reading from the N-terminus, the 97-residue chain is Citrate lyase acyl carrier protein (97 aa).

O-(phosphoribosyl dephospho-coenzyme A)serine is present on Ser14.

This sequence belongs to the CitD family. Oligomer with a subunit composition of (alpha,beta,gamma)6.

It is found in the cytoplasm. Its function is as follows. Covalent carrier of the coenzyme of citrate lyase. The protein is Citrate lyase acyl carrier protein of Lactobacillus acidophilus (strain ATCC 700396 / NCK56 / N2 / NCFM).